Reading from the N-terminus, the 152-residue chain is Deoxyuridine 5'-triphosphate nucleotidohydrolase (152 aa).

Substrate is bound by residues 71–73 (RSG), Asn84, 88–90 (LID), and Met98.

Belongs to the dUTPase family. Mg(2+) serves as cofactor.

The catalysed reaction is dUTP + H2O = dUMP + diphosphate + H(+). Its pathway is pyrimidine metabolism; dUMP biosynthesis; dUMP from dCTP (dUTP route): step 2/2. Its function is as follows. This enzyme is involved in nucleotide metabolism: it produces dUMP, the immediate precursor of thymidine nucleotides and it decreases the intracellular concentration of dUTP so that uracil cannot be incorporated into DNA. The chain is Deoxyuridine 5'-triphosphate nucleotidohydrolase from Shewanella baltica (strain OS155 / ATCC BAA-1091).